Here is a 229-residue protein sequence, read N- to C-terminus: MLSGLIQRFEEEKMKHNQERVEELSLVRVDDAISQPPRYAPSAPMPSSMPTVALEILDKAMSNTTGATQTQKAEKAAFASYAEAFRDDVRLRQIKRHVNEQILPKLKSDLGGLKKKRAIIHMTLLIAAVVALLTSVCTLSSDMSVAFKLNGTSAEIPQWFKSLNPMLGVVNVGATFLMMVCAKSERSLNQQIDMIKKEVMKKQSYNDAVRMSFTEFSSVPLDGFELPLT.

2 helical membrane passes run 119-139 (IIHM…VCTL) and 162-182 (SLNP…MVCA).

This sequence belongs to the orbivirus NS3 family. As to quaternary structure, forms homooligomers via coiled-coil motif. Interacts with host OPTN; this interaction inhibits innate immune response.

It is found in the host cell membrane. The protein resides in the host Golgi apparatus. In terms of biological role, plays a role in the inhibition of host innate immune response. Interacts with host OPTN and thus inhibits the recruitment of TBK1 to the host Golgi apparatus. In turn, downstream partner IRF3 cannot be activated and IFN-beta production is impaired. Facilitates viral particle release either by increasing plasma membrane permeability through a viroporin-like activity or by viral budding. The protein is Non-structural protein P8 (Segment-10) of Antilocapra americana (Pronghorn).